The following is a 351-amino-acid chain: Photosystem II D2 protein (351 aa).

The chain crosses the membrane as a helical span at residues 39–59 (TAYLAAGGWFTGTTFVTSWYT). His-116 lines the chlorophyll a pocket. Residues 123 to 139 (GFCLRQFEIARLVGIRP) traverse the membrane as a helical segment. Gln-128 and Asn-141 together coordinate pheophytin a. Residues 151 to 164 (VFVSVFLLYPLGQA) traverse the membrane as a helical segment. His-196 provides a ligand contact to chlorophyll a. A helical transmembrane segment spans residues 206–226 (GALLCAIHGATVENTLFEDGD). Residues His-213 and Phe-260 each contribute to the a plastoquinone site. Fe cation is bound at residue His-213. His-267 is a binding site for Fe cation. The chain crosses the membrane as a helical span at residues 277–293 (GLWTSSIGIVGLALNLR).

Belongs to the reaction center PufL/M/PsbA/D family. As to quaternary structure, PSII is composed of 1 copy each of membrane proteins PsbA, PsbB, PsbC, PsbD, PsbE, PsbF, PsbH, PsbI, PsbJ, PsbK, PsbL, PsbM, PsbT, PsbX, PsbY, PsbZ, Psb30/Ycf12, at least 3 peripheral proteins of the oxygen-evolving complex and a large number of cofactors. It forms dimeric complexes. The D1/D2 heterodimer binds P680, chlorophylls that are the primary electron donor of PSII, and subsequent electron acceptors. It shares a non-heme iron and each subunit binds pheophytin, quinone, additional chlorophylls, carotenoids and lipids. There is also a Cl(-1) ion associated with D1 and D2, which is required for oxygen evolution. The PSII complex binds additional chlorophylls, carotenoids and specific lipids. is required as a cofactor.

It is found in the plastid. Its subcellular location is the chloroplast thylakoid membrane. It catalyses the reaction 2 a plastoquinone + 4 hnu + 2 H2O = 2 a plastoquinol + O2. In terms of biological role, photosystem II (PSII) is a light-driven water:plastoquinone oxidoreductase that uses light energy to abstract electrons from H(2)O, generating O(2) and a proton gradient subsequently used for ATP formation. It consists of a core antenna complex that captures photons, and an electron transfer chain that converts photonic excitation into a charge separation. The D1/D2 (PsbA/PsbD) reaction center heterodimer binds P680, the primary electron donor of PSII as well as several subsequent electron acceptors. D2 is needed for assembly of a stable PSII complex. This chain is Photosystem II D2 protein, found in Thalassiosira pseudonana (Marine diatom).